Here is a 340-residue protein sequence, read N- to C-terminus: GTP 3',8-cyclase (340 aa).

The Radical SAM core domain maps to 8-227 (KLGRPIRDLR…TMIEQHFEID (220 aa)). Arg17 provides a ligand contact to GTP. Positions 24 and 28 each coordinate [4Fe-4S] cluster. An S-adenosyl-L-methionine-binding site is contributed by Tyr30. Cys31 contacts [4Fe-4S] cluster. Arg71 contacts GTP. Position 75 (Gly75) interacts with S-adenosyl-L-methionine. Thr102 provides a ligand contact to GTP. Position 126 (Ser126) interacts with S-adenosyl-L-methionine. Lys163 contacts GTP. Met197 is a binding site for S-adenosyl-L-methionine. Positions 261 and 264 each coordinate [4Fe-4S] cluster. 266-268 (RAR) is a GTP binding site. A [4Fe-4S] cluster-binding site is contributed by Cys278.

This sequence belongs to the radical SAM superfamily. MoaA family. In terms of assembly, monomer and homodimer. Requires [4Fe-4S] cluster as cofactor.

It catalyses the reaction GTP + AH2 + S-adenosyl-L-methionine = (8S)-3',8-cyclo-7,8-dihydroguanosine 5'-triphosphate + 5'-deoxyadenosine + L-methionine + A + H(+). It participates in cofactor biosynthesis; molybdopterin biosynthesis. Catalyzes the cyclization of GTP to (8S)-3',8-cyclo-7,8-dihydroguanosine 5'-triphosphate. This chain is GTP 3',8-cyclase, found in Staphylococcus aureus (strain Mu3 / ATCC 700698).